We begin with the raw amino-acid sequence, 325 residues long: Acetyl-coenzyme A carboxylase carboxyl transferase subunit alpha (325 aa).

The CoA carboxyltransferase C-terminal domain occupies 38–292 (RLEERLSKLQ…DGILKETLKS (255 aa)).

This sequence belongs to the AccA family. As to quaternary structure, acetyl-CoA carboxylase is a heterohexamer composed of biotin carboxyl carrier protein (AccB), biotin carboxylase (AccC) and two subunits each of ACCase subunit alpha (AccA) and ACCase subunit beta (AccD).

The protein localises to the cytoplasm. It carries out the reaction N(6)-carboxybiotinyl-L-lysyl-[protein] + acetyl-CoA = N(6)-biotinyl-L-lysyl-[protein] + malonyl-CoA. Its pathway is lipid metabolism; malonyl-CoA biosynthesis; malonyl-CoA from acetyl-CoA: step 1/1. Its function is as follows. Component of the acetyl coenzyme A carboxylase (ACC) complex. First, biotin carboxylase catalyzes the carboxylation of biotin on its carrier protein (BCCP) and then the CO(2) group is transferred by the carboxyltransferase to acetyl-CoA to form malonyl-CoA. In Bacillus velezensis (strain DSM 23117 / BGSC 10A6 / LMG 26770 / FZB42) (Bacillus amyloliquefaciens subsp. plantarum), this protein is Acetyl-coenzyme A carboxylase carboxyl transferase subunit alpha.